We begin with the raw amino-acid sequence, 395 residues long: Acetate kinase (395 aa).

Asparagine 8 serves as a coordination point for Mg(2+). An ATP-binding site is contributed by lysine 15. Arginine 89 serves as a coordination point for substrate. Aspartate 146 serves as the catalytic Proton donor/acceptor. Residues 206–210, 281–283, and 329–333 contribute to the ATP site; these read HLGNG, DLR, and GIGEN. Position 382 (glutamate 382) interacts with Mg(2+).

The protein belongs to the acetokinase family. As to quaternary structure, homodimer. Mg(2+) is required as a cofactor. The cofactor is Mn(2+).

The protein resides in the cytoplasm. It catalyses the reaction acetate + ATP = acetyl phosphate + ADP. It functions in the pathway metabolic intermediate biosynthesis; acetyl-CoA biosynthesis; acetyl-CoA from acetate: step 1/2. Functionally, catalyzes the formation of acetyl phosphate from acetate and ATP. Can also catalyze the reverse reaction. The sequence is that of Acetate kinase from Bacillus velezensis (strain DSM 23117 / BGSC 10A6 / LMG 26770 / FZB42) (Bacillus amyloliquefaciens subsp. plantarum).